Consider the following 241-residue polypeptide: Pyridoxine 5'-phosphate synthase (241 aa).

N7 contributes to the 3-amino-2-oxopropyl phosphate binding site. 9–10 (DH) contacts 1-deoxy-D-xylulose 5-phosphate. R18 serves as a coordination point for 3-amino-2-oxopropyl phosphate. H43 serves as the catalytic Proton acceptor. The 1-deoxy-D-xylulose 5-phosphate site is built by R45 and H50. E70 (proton acceptor) is an active-site residue. 1-deoxy-D-xylulose 5-phosphate is bound at residue T100. The Proton donor role is filled by H191. 3-amino-2-oxopropyl phosphate-binding positions include S192 and 213–214 (GH).

This sequence belongs to the PNP synthase family. Homooctamer; tetramer of dimers.

The protein resides in the cytoplasm. It catalyses the reaction 3-amino-2-oxopropyl phosphate + 1-deoxy-D-xylulose 5-phosphate = pyridoxine 5'-phosphate + phosphate + 2 H2O + H(+). Its pathway is cofactor biosynthesis; pyridoxine 5'-phosphate biosynthesis; pyridoxine 5'-phosphate from D-erythrose 4-phosphate: step 5/5. In terms of biological role, catalyzes the complicated ring closure reaction between the two acyclic compounds 1-deoxy-D-xylulose-5-phosphate (DXP) and 3-amino-2-oxopropyl phosphate (1-amino-acetone-3-phosphate or AAP) to form pyridoxine 5'-phosphate (PNP) and inorganic phosphate. This is Pyridoxine 5'-phosphate synthase from Nitrosomonas eutropha (strain DSM 101675 / C91 / Nm57).